The primary structure comprises 220 residues: 5'(3')-deoxyribonucleotidase, mitochondrial (220 aa).

A mitochondrion-targeting transit peptide spans 1-23 (MHRLRGCCARPRGAPLRAERSRA). The active-site Nucleophile is the Asp33. Mg(2+) is bound by residues Asp33 and Asp35. The Proton donor role is filled by Asp35. Residues Asp35, Phe41, Phe67, Trp68, Val69, Trp88, Thr122, and Lys157 each coordinate substrate. Asp168 contacts Mg(2+).

This sequence belongs to the 5'(3')-deoxyribonucleotidase family. Homodimer. Requires Mg(2+) as cofactor.

It is found in the mitochondrion. In terms of biological role, dephosphorylates specifically the 5' and 2'(3')-phosphates of uracil and thymine deoxyribonucleotides, and so protects mitochondrial DNA replication from excess dTTP. Has only marginal activity towards dIMP and dGMP. The protein is 5'(3')-deoxyribonucleotidase, mitochondrial (Nt5m) of Mus musculus (Mouse).